Here is a 418-residue protein sequence, read N- to C-terminus: Glucose-1-phosphate adenylyltransferase (418 aa).

Alpha-D-glucose 1-phosphate-binding positions include Tyr107, Gly172, 187 to 188 (EK), and Ser205.

It belongs to the bacterial/plant glucose-1-phosphate adenylyltransferase family. As to quaternary structure, homotetramer.

The catalysed reaction is alpha-D-glucose 1-phosphate + ATP + H(+) = ADP-alpha-D-glucose + diphosphate. It functions in the pathway glycan biosynthesis; glycogen biosynthesis. Involved in the biosynthesis of ADP-glucose, a building block required for the elongation reactions to produce glycogen. Catalyzes the reaction between ATP and alpha-D-glucose 1-phosphate (G1P) to produce pyrophosphate and ADP-Glc. This chain is Glucose-1-phosphate adenylyltransferase, found in Gemmatimonas aurantiaca (strain DSM 14586 / JCM 11422 / NBRC 100505 / T-27).